The following is a 207-amino-acid chain: MIKLTKRQSDVLETIREFISETGFPPTRAEIARRLGFKSPNAAEEHLKALCKKGAIEMLSGASRGIRLVDRASNDDPTDNLGLPVIGKVAAGYPILAQENIASHVNIPANMFSPQADYFLSVSGTSMKDIGIMEGDLLAVHKTTTVRNGQIVVARIGDEVTVKRFEQKGSIVRLIPENEEFNDIIVDLESEEFAIEGLSVGVIRQGL.

The H-T-H motif DNA-binding region spans 28 to 48 (RAEIARRLGFKSPNAAEEHLK). Active-site for autocatalytic cleavage activity residues include S126 and K163.

This sequence belongs to the peptidase S24 family. In terms of assembly, homodimer.

The catalysed reaction is Hydrolysis of Ala-|-Gly bond in repressor LexA.. Its function is as follows. Represses a number of genes involved in the response to DNA damage (SOS response), including recA and lexA. In the presence of single-stranded DNA, RecA interacts with LexA causing an autocatalytic cleavage which disrupts the DNA-binding part of LexA, leading to derepression of the SOS regulon and eventually DNA repair. The chain is LexA repressor from Marinomonas sp. (strain MWYL1).